We begin with the raw amino-acid sequence, 211 residues long: Sec-independent protein translocase protein TatB (211 aa).

Residues Met-1 to Gly-21 form a helical membrane-spanning segment. The tract at residues Ala-175 to Pro-211 is disordered. Positions Thr-194–Thr-204 are enriched in polar residues.

This sequence belongs to the TatB family. As to quaternary structure, the Tat system comprises two distinct complexes: a TatABC complex, containing multiple copies of TatA, TatB and TatC subunits, and a separate TatA complex, containing only TatA subunits. Substrates initially bind to the TatABC complex, which probably triggers association of the separate TatA complex to form the active translocon.

The protein localises to the cell inner membrane. In terms of biological role, part of the twin-arginine translocation (Tat) system that transports large folded proteins containing a characteristic twin-arginine motif in their signal peptide across membranes. Together with TatC, TatB is part of a receptor directly interacting with Tat signal peptides. TatB may form an oligomeric binding site that transiently accommodates folded Tat precursor proteins before their translocation. The polypeptide is Sec-independent protein translocase protein TatB (Xanthomonas oryzae pv. oryzae (strain MAFF 311018)).